A 562-amino-acid chain; its full sequence is MTFRDILSVTFEGPRASSSTGGSGAGGGAGTVGPEGPAVGGVPGATGGSAVVGTGSGEDNQSSTAEAGAAASGEVNGSAAVGGLVVSAQGVGVGVFLAAFILTAVAGNLLVILSVACNRHLQTVTNYFIVNLAVADLLLSAAVLPFSATMEVLGFWPFGRTFCDVWAAVDVLCCTASILSLCTISVDRYVGVRHSLKYPAIMTERKAAAILALLWAVALVVSVGPLLGWKEPVPPDERFCGITEEVGYAIFSSVCSFYLPMAVIVVMYCRVYVVARSTTRSLEAGIKREPGKASEVVLRIHCRGAATSAKGNPGTQSSKGHTLRSSLSVRLLKFSREKKAAKTLAIVVGVFVLCWFPFFFVLPLGSLFPQLKPSEGVFKVIFWLGYFNSCVNPLIYPCSSREFKRAFLRLLRCQCRRRRRRLWPSLRPPLASLDRRPALRLCPQPAHRTPRGSPSPHCTPRPGLRRHAGGAGFGLRPSKASLRLREWRLLGPLQRPTTQLRAKVSSLSHKFRSGGARRAETACALRSEVEAVSLNVPQDGAEAVICQAYEPGDLSNLRETDI.

Topologically, residues 1 to 90 are extracellular; that stretch reads MTFRDILSVT…VGGLVVSAQG (90 aa). Disordered stretches follow at residues 13 to 44 and 50 to 69; these read GPRA…GVPG and AVVG…EAGA. The segment covering 21 to 44 has biased composition (gly residues); the sequence is GGSGAGGGAGTVGPEGPAVGGVPG. Asn60 and Asn76 each carry an N-linked (GlcNAc...) asparagine glycan. Residues 91 to 115 traverse the membrane as a helical segment; sequence VGVGVFLAAFILTAVAGNLLVILSV. The Cytoplasmic segment spans residues 116–127; it reads ACNRHLQTVTNY. A helical membrane pass occupies residues 128 to 153; that stretch reads FIVNLAVADLLLSAAVLPFSATMEVL. The Extracellular segment spans residues 154–163; sequence GFWPFGRTFC. A helical transmembrane segment spans residues 164–186; sequence DVWAAVDVLCCTASILSLCTISV. At 187-207 the chain is on the cytoplasmic side; sequence DRYVGVRHSLKYPAIMTERKA. A helical transmembrane segment spans residues 208–232; the sequence is AAILALLWAVALVVSVGPLLGWKEP. At 233–245 the chain is on the extracellular side; it reads VPPDERFCGITEE. A helical membrane pass occupies residues 246–269; it reads VGYAIFSSVCSFYLPMAVIVVMYC. At 270–342 the chain is on the cytoplasmic side; that stretch reads RVYVVARSTT…KFSREKKAAK (73 aa). A helical membrane pass occupies residues 343-367; that stretch reads TLAIVVGVFVLCWFPFFFVLPLGSL. The Extracellular segment spans residues 368–374; sequence FPQLKPS. A helical transmembrane segment spans residues 375-399; it reads EGVFKVIFWLGYFNSCVNPLIYPCS. Residues 400–562 lie on the Cytoplasmic side of the membrane; that stretch reads SREFKRAFLR…DLSNLRETDI (163 aa). Cys413 is lipidated: S-palmitoyl cysteine. Positions 444–472 are disordered; that stretch reads QPAHRTPRGSPSPHCTPRPGLRRHAGGAG.

It belongs to the G-protein coupled receptor 1 family. Adrenergic receptor subfamily. ADRA1D sub-subfamily. Interacts with FLNA (via filamin repeat 21); increases PKA-mediated phosphorylation of FLNA. Palmitoylated. Palmitoylation by ZDHHC21 may increase the expression of the receptor and regulate downstream signaling.

The protein localises to the cell membrane. This alpha-adrenergic receptor mediates its effect through the influx of extracellular calcium. The polypeptide is Alpha-1D adrenergic receptor (Adra1d) (Mus musculus (Mouse)).